The primary structure comprises 310 residues: GMP synthase [glutamine-hydrolyzing] subunit B (310 aa).

In terms of domain architecture, GMPS ATP-PPase spans 1-187 (MSFSDYISRI…LGLPTDIQPF (187 aa)). Position 27-33 (27-33 (SGGQDSS)) interacts with ATP.

Heterodimer composed of a glutamine amidotransferase subunit (A) and a GMP-binding subunit (B).

It catalyses the reaction XMP + L-glutamine + ATP + H2O = GMP + L-glutamate + AMP + diphosphate + 2 H(+). It functions in the pathway purine metabolism; GMP biosynthesis; GMP from XMP (L-Gln route): step 1/1. In terms of biological role, catalyzes the synthesis of GMP from XMP. The sequence is that of GMP synthase [glutamine-hydrolyzing] subunit B (guaAB) from Thermoplasma volcanium (strain ATCC 51530 / DSM 4299 / JCM 9571 / NBRC 15438 / GSS1).